Reading from the N-terminus, the 357-residue chain is S-adenosylmethionine decarboxylase proenzyme (357 aa).

Residues Glu-11 and Glu-14 contribute to the active site. The active-site Schiff-base intermediate with substrate; via pyruvic acid is Ser-71. Ser-71 is modified (pyruvic acid (Ser); by autocatalysis). Cys-85 acts as the Proton donor; for catalytic activity in catalysis. Catalysis depends on proton acceptor; for processing activity residues Ser-234 and His-247.

This sequence belongs to the eukaryotic AdoMetDC family. Pyruvate is required as a cofactor. In terms of processing, is synthesized initially as an inactive proenzyme. Formation of the active enzyme involves a self-maturation process in which the active site pyruvoyl group is generated from an internal serine residue via an autocatalytic post-translational modification. Two non-identical subunits are generated from the proenzyme in this reaction, and the pyruvate is formed at the N-terminus of the alpha chain, which is derived from the carboxyl end of the proenzyme. The post-translation cleavage follows an unusual pathway, termed non-hydrolytic serinolysis, in which the side chain hydroxyl group of the serine supplies its oxygen atom to form the C-terminus of the beta chain, while the remainder of the serine residue undergoes an oxidative deamination to produce ammonia and the pyruvoyl group blocking the N-terminus of the alpha chain.

The catalysed reaction is S-adenosyl-L-methionine + H(+) = S-adenosyl 3-(methylsulfanyl)propylamine + CO2. Its pathway is amine and polyamine biosynthesis; S-adenosylmethioninamine biosynthesis; S-adenosylmethioninamine from S-adenosyl-L-methionine: step 1/1. This Catharanthus roseus (Madagascar periwinkle) protein is S-adenosylmethionine decarboxylase proenzyme (SAMDC).